The chain runs to 1327 residues: P-glycoprotein 14 (1327 aa).

Basic and acidic residues predominate over residues 1 to 17; it reads MAPKDDPDNRGFDDQRR. The interval 1–23 is disordered; it reads MAPKDDPDNRGFDDQRRPSQRST. Over 1–104 the chain is Cytoplasmic; sequence MAPKDDPDNR…RYGKKFDYLL (104 aa). Residues 105–125 traverse the membrane as a helical segment; that stretch reads LFIGTICAIISGVSQPILALV. One can recognise an ABC transmembrane type-1 1 domain in the interval 106–394; that stretch reads FIGTICAIIS…ISPHMMVLLN (289 aa). Topologically, residues 126-151 are extracellular; the sequence is SGRVTNALLVYPPTSKQFRNKANENV. A helical membrane pass occupies residues 152–172; the sequence is YIFLGIGIFISITNFIQYMCF. The Cytoplasmic segment spans residues 173 to 225; that stretch reads QHCCTRVMAQMRHRFVYSVLRQNAGWFDKNHSGTITTKLNDSMERIREGIGDK. A helical membrane pass occupies residues 226–246; that stretch reads LGVLLRGFAMLIAAIVVAYIY. Residue E247 is a topological domain, extracellular. The helical transmembrane segment at 248–268 threads the bilayer; the sequence is WRLASMMLGVAPTCCICMSLL. Topologically, residues 269 to 331 are cytoplasmic; the sequence is ARQMTSTTIK…KFAVWKGFWS (63 aa). A helical transmembrane segment spans residues 332 to 352; sequence GFFGGLFFFWLFSFLGCGMLY. At 353–364 the chain is on the extracellular side; sequence GAYLLKVGIITT. A helical transmembrane segment spans residues 365 to 385; sequence PGDVFIVVMSMLLGAYFLGLI. The Cytoplasmic portion of the chain corresponds to 386–766; the sequence is SPHMMVLLNA…NAKGNYLYMF (381 aa). The ABC transporter 1 domain maps to 429 to 665; that stretch reads VKFENVHFRY…GGRYFDLVKA (237 aa). 464-471 provides a ligand contact to ATP; the sequence is GHSGCGKS. Positions 671–721 are disordered; it reads DPEATEEFEEEEIDLDDTSRSSRRSSMTSARSGSEAFRRGNSLNDSFSGSK. The span at 673–686 shows a compositional bias: acidic residues; sequence EATEEFEEEEIDLD. Residues 694 to 704 are compositionally biased toward low complexity; that stretch reads RSSMTSARSGS. Residues 711 to 721 are compositionally biased toward polar residues; the sequence is NSLNDSFSGSK. The region spanning 766-1053 is the ABC transmembrane type-1 2 domain; sequence FLGTVFALIR…SAQYFPEFVK (288 aa). A helical membrane pass occupies residues 767–789; that stretch reads LGTVFALIRGLELPALALIFGWV. The Extracellular portion of the chain corresponds to 790–805; the sequence is FEGFTFVPYGGRMMHR. Residues 806 to 826 traverse the membrane as a helical segment; sequence MAMAVIAFASVGVGVWFSQLA. At 827–886 the chain is on the cytoplasmic side; the sequence is SSVLFAVVSENLSMRFRVQSFRNLLYQDASYFDNPAHAPGKLITRLASDAPNIKAVVDAR. Residues 887–907 traverse the membrane as a helical segment; sequence MLQVIYALAAIIANIAIAFIY. Over 908 to 910 the chain is Extracellular; it reads CWQ. The chain crosses the membrane as a helical span at residues 911–931; the sequence is IGILGTSLILLLAFVMIGLAY. Over 932-996 the chain is Cytoplasmic; the sequence is KISLMNVEQI…KGMIEAINYS (65 aa). A helical transmembrane segment spans residues 997 to 1017; it reads LTQSFMYFMMCFTYAVGIRII. The Extracellular segment spans residues 1018–1030; that stretch reads YQGDKSSDDTFKG. Residues 1031–1051 form a helical membrane-spanning segment; sequence IIAMMLGAVAVMNSAQYFPEF. Over 1052–1327 the chain is Cytoplasmic; that stretch reads VKAKTAAGML…KLIKKQDLAV (276 aa). Residues 1086 to 1322 enclose the ABC transporter 2 domain; the sequence is ILFENVKFSY…KGRYYKLIKK (237 aa). 1121 to 1128 contacts ATP; it reads GPSGSGKS.

The protein belongs to the ABC transporter superfamily. ABCB family. Multidrug resistance exporter (TC 3.A.1.201) subfamily. In terms of tissue distribution, expressed in pharyngeal epithelial cells that surround the anterior pharyngeal cuticle. Shares same expression pattern as sms-5.

Its subcellular location is the apical cell membrane. In terms of biological role, contributes to the establishment of a polar lipid barrier to block small molecule passage into the pharyngeal cuticle. Probably exports polar lipids into the developing pharyngeal cuticle to protect against xenobiotic insult. Likely functions in the same pathway as sphingomyelin synthase sms-5. The chain is P-glycoprotein 14 from Caenorhabditis elegans.